The following is a 233-amino-acid chain: Nickel import system ATP-binding protein NikE (233 aa).

Residues 2 to 228 (IELKHVTFGY…DRHPYTKELV (227 aa)) enclose the ABC transporter domain. ATP is bound at residue 35–42 (GESGCGKS).

It belongs to the ABC transporter superfamily. The complex is composed of two ATP-binding proteins (NikD and NikE), two transmembrane proteins (NikB and NikC) and a solute-binding protein (NikA).

The protein localises to the cell membrane. It carries out the reaction Ni(2+)(out) + ATP + H2O = Ni(2+)(in) + ADP + phosphate + H(+). Part of the ABC transporter complex NikABCDE (Opp2) involved in nickel import. Probably responsible for energy coupling to the transport system. The protein is Nickel import system ATP-binding protein NikE of Staphylococcus aureus (strain USA300).